The chain runs to 1666 residues: Atrochrysone carboxylic acid synthase PKS4 (1666 aa).

In terms of domain architecture, Ketosynthase family 3 (KS3) spans 15-452 (FEPIAIVGIG…GNAGFMVIEE (438 aa)). Active-site for beta-ketoacyl synthase activity residues include Cys-194, His-332, and His-372. The segment at 555–863 (AFCFSGQGGE…WMTALDALMR (309 aa)) is malonyl-CoA:ACP transacylase (MAT) domain. Ser-632 acts as the For acyl/malonyl transferase activity in catalysis. The segment at 905 to 1034 (REVKASSTML…EQDLLESLSL (130 aa)) is N-terminal hotdog fold. The PKS/mFAS DH domain maps to 905-1206 (REVKASSTML…MAKMKIYVLK (302 aa)). A product template (PT) domain region spans residues 935-1203 (LLNHVMAGYT…DVRMAKMKIY (269 aa)). Residues 1050-1206 (STDVLRKELA…MAKMKIYVLK (157 aa)) are C-terminal hotdog fold. Residue Ser-1269 is modified to O-(pantetheine 4'-phosphoryl)serine. Residues 1331–1395 (ATSPSLPIMP…TSTEPSQTLV (65 aa)) enclose the Carrier domain. The interval 1334-1397 (PSLPIMPNGV…TEPSQTLVAN (64 aa)) is proline-rich linker region. The alpha/beta hydrolase superfamily-type thioesterase (TE) domain stretch occupies residues 1444 to 1529 (TVIGIHCPGL…PPGVVGLTAQ (86 aa)).

The catalysed reaction is holo-[ACP] + 8 malonyl-CoA + 8 H(+) = atrochrysone carboxyl-[ACP] + 8 CO2 + 8 CoA + 2 H2O. It participates in secondary metabolite biosynthesis. Non-reducing polyketide synthase that synthesizes the universal anthraquinone precursor atrochrysone carboxylic acid from malonyl-CoA. Produces a mixture of both 3R and 3S enantiomers with an excess of the 3S form. PKS4 catalyzes both hepta- and octaketide synthesis and also yields 6-hydroxymusizin, probably via carboxylating activity inherent to the KS domain. The chain is Atrochrysone carboxylic acid synthase PKS4 from Calonarius odorifer (Mushroom).